A 603-amino-acid chain; its full sequence is Spastin (603 aa).

The disordered stretch occupies residues 1 to 34 (MNSPGGRNNKKKPVTPAAETGPGPPTPPPPPAET). The Cytoplasmic portion of the chain corresponds to 1–54 (MNSPGGRNNKKKPVTPAAETGPGPPTPPPPPAETQVLLAPPSLHKRNLYLFSYP). Pro residues predominate over residues 22-32 (PGPPTPPPPPA). An intramembrane region (helical) is located at residues 55 to 75 (LLAAFSLLRFLAFQLGLLFVW). At 76–603 (FCERLSRRVM…WNKEFGDTTV (528 aa)) the chain is on the cytoplasmic side. In terms of domain architecture, MIT spans 113-188 (YHQQAFQYIS…LMAKDRLQLL (76 aa)). The disordered stretch occupies residues 216-294 (GLLKPEKGAV…RTNKPTTPTT (79 aa)). The span at 219–231 (KPEKGAVPKKKDP) shows a compositional bias: basic and acidic residues. Positions 281-294 (KNNTRTNKPTTPTT) are enriched in low complexity. Position 369 to 376 (369 to 376 (GPPGNGKT)) interacts with ATP.

The protein belongs to the AAA ATPase family. Spastin subfamily. As to quaternary structure, homohexamer. The homohexamer is stabilized by ATP-binding. The homohexamer may adopt a ring conformation through which microtubules pass prior to being severed. Interacts with microtubules.

It is found in the membrane. It localises to the cytoplasm. Its subcellular location is the cytoskeleton. The protein localises to the microtubule organizing center. The protein resides in the centrosome. It is found in the perinuclear region. It localises to the nucleus. It catalyses the reaction n ATP + n H2O + a microtubule = n ADP + n phosphate + (n+1) alpha/beta tubulin heterodimers.. Functionally, ATP-dependent microtubule severing protein that specifically recognizes and cuts microtubules that are polyglutamylated. Preferentially recognizes and acts on microtubules decorated with short polyglutamate tails: severing activity increases as the number of glutamates per tubulin rises from one to eight, but decreases beyond this glutamylation threshold. Microtubule severing promotes reorganization of cellular microtubule arrays and the release of microtubules from the centrosome following nucleation. Required for membrane traffic from the endoplasmic reticulum (ER) to the Golgi and for completion of the abscission stage of cytokinesis. Also plays a role in axon growth and the formation of axonal branches. This chain is Spastin, found in Xenopus tropicalis (Western clawed frog).